A 158-amino-acid polypeptide reads, in one-letter code: NAD(P)H-quinone oxidoreductase subunit J, chloroplastic (158 aa).

The protein belongs to the complex I 30 kDa subunit family. As to quaternary structure, NDH is composed of at least 16 different subunits, 5 of which are encoded in the nucleus.

The protein resides in the plastid. It localises to the chloroplast thylakoid membrane. The enzyme catalyses a plastoquinone + NADH + (n+1) H(+)(in) = a plastoquinol + NAD(+) + n H(+)(out). It catalyses the reaction a plastoquinone + NADPH + (n+1) H(+)(in) = a plastoquinol + NADP(+) + n H(+)(out). Its function is as follows. NDH shuttles electrons from NAD(P)H:plastoquinone, via FMN and iron-sulfur (Fe-S) centers, to quinones in the photosynthetic chain and possibly in a chloroplast respiratory chain. The immediate electron acceptor for the enzyme in this species is believed to be plastoquinone. Couples the redox reaction to proton translocation, and thus conserves the redox energy in a proton gradient. This Nymphaea alba (White water-lily) protein is NAD(P)H-quinone oxidoreductase subunit J, chloroplastic.